The sequence spans 332 residues: MYRPRARAAPEGRVRGCAVPSTVLLLLAYLAYLALGTGVFWTLEGRAAQDSSRSFQRDKWELLQNFTCLDRPALDSLIRDVVQAYKNGASLLSNTTSMGRWELVGSFFFSVSTITTIGYGNLSPNTMAARLFCIFFALVGIPLNLVVLNRLGHLMQQGVNHWASRLGGTWQDPDKARWLAGSGALLSGLLLFLLLPPLLFSHMEGWSYTEGFYFAFITLSTVGFGDYVIGMNPSQRYPLWYKNMVSLWILFGMAWLALIIKLILSQLETPGRVCSCCHHSSKEDFKSQSWRQGPDREPESHSPQQGCYPEGPMGIIQHLEPSAHAAGCGKDS.

Residues 1 to 20 are Cytoplasmic-facing; sequence MYRPRARAAPEGRVRGCAVP. Residues 21 to 43 traverse the membrane as a helical segment; sequence STVLLLLAYLAYLALGTGVFWTL. Asn-65 and Asn-94 each carry an N-linked (GlcNAc...) asparagine glycan. An intramembrane region (pore-forming) is located at residues 106 to 124; it reads SFFFSVSTITTIGYGNLSP. Positions 116, 117, 118, and 119 each coordinate K(+). Residues 116 to 121 are selectivity filter 1; that stretch reads TIGYGN. A helical membrane pass occupies residues 128 to 148; the sequence is AARLFCIFFALVGIPLNLVVL. The Cytoplasmic portion of the chain corresponds to 149–179; that stretch reads NRLGHLMQQGVNHWASRLGGTWQDPDKARWL. A helical transmembrane segment spans residues 180 to 200; the sequence is AGSGALLSGLLLFLLLPPLLF. The segment at residues 211–230 is an intramembrane region (pore-forming); it reads GFYFAFITLSTVGFGDYVIG. K(+) contacts are provided by Thr-221, Val-222, Gly-223, and Phe-224. The tract at residues 221–226 is selectivity filter 2; that stretch reads TVGFGD. Residues 244–264 traverse the membrane as a helical segment; the sequence is MVSLWILFGMAWLALIIKLIL. The Cytoplasmic portion of the chain corresponds to 265–332; sequence SQLETPGRVC…AHAAGCGKDS (68 aa). Residues 287–312 form a disordered region; sequence SQSWRQGPDREPESHSPQQGCYPEGP.

This sequence belongs to the two pore domain potassium channel (TC 1.A.1.8) family. In terms of assembly, homodimer; disulfide-linked. Heterodimer with KCNK5 and KCNK16. In terms of tissue distribution, widely expressed. Highly expressed in aorta and coronary artery. Expressed in pancreas, in both endocrine (alpha, beta, gamma, delta, and epsilon) and exocrine (acinar and ductal) cells.

It is found in the cell membrane. It carries out the reaction K(+)(in) = K(+)(out). It catalyses the reaction Rb(+)(in) = Rb(+)(out). The enzyme catalyses Cs(+)(in) = Cs(+)(out). With respect to regulation, inhibited by Ba(2+), quinidine, chloroform and halothane. Activated at alkaline pH. Activated by quinine and isoflurane. Functionally, k(+) channel that conducts voltage-dependent outward rectifying currents upon membrane depolarization. Voltage sensing is coupled to K(+) electrochemical gradient in an 'ion flux gating' mode where outward but not inward ion flow opens the gate. Homo- and heterodimerizes to form functional channels with distinct regulatory and gating properties. Present in the cardiac conduction system where it may regulate action potential duration and beating frequency of cardiac myocytes. Permeable to other monovalent cations such as Rb(+) and Cs(+). This is Potassium channel subfamily K member 17 from Homo sapiens (Human).